The primary structure comprises 208 residues: High frequency lysogenization protein HflD homolog (208 aa).

It belongs to the HflD family.

It is found in the cytoplasm. The protein resides in the cell inner membrane. This is High frequency lysogenization protein HflD homolog from Edwardsiella ictaluri (strain 93-146).